We begin with the raw amino-acid sequence, 66 residues long: Large ribosomal subunit protein bL35 (66 aa).

It belongs to the bacterial ribosomal protein bL35 family.

In Deinococcus deserti (strain DSM 17065 / CIP 109153 / LMG 22923 / VCD115), this protein is Large ribosomal subunit protein bL35.